Consider the following 173-residue polypeptide: Probable DNA-directed RNA polymerase subunit delta (173 aa).

The HTH HARE-type domain occupies 14 to 81 (NSFIDLAYMA…GEYMWGLRDW (68 aa)). The segment at 113-173 (LLGEDEVEDE…DEFDDEEEEE (61 aa)) is disordered. Residues 115–173 (GEDEVEDELDLLPSDGDEENVDTEDEEVEDELDEAGLVVEPDEEFEDEEDEFDDEEEEE) show a composition bias toward acidic residues.

The protein belongs to the RpoE family. In terms of assembly, RNAP is composed of a core of 2 alpha, a beta and a beta' subunits. The core is associated with a delta subunit and one of several sigma factors.

In terms of biological role, participates in both the initiation and recycling phases of transcription. In the presence of the delta subunit, RNAP displays an increased specificity of transcription, a decreased affinity for nucleic acids, and an increased efficiency of RNA synthesis because of enhanced recycling. The polypeptide is Probable DNA-directed RNA polymerase subunit delta (Macrococcus caseolyticus (strain JCSC5402) (Macrococcoides caseolyticum)).